The following is a 296-amino-acid chain: Fructose-bisphosphate aldolase class 1 (296 aa).

The active-site Proton acceptor is the Glu175. Lys212 serves as the catalytic Schiff-base intermediate with dihydroxyacetone-P.

This sequence belongs to the class I fructose-bisphosphate aldolase family.

It catalyses the reaction beta-D-fructose 1,6-bisphosphate = D-glyceraldehyde 3-phosphate + dihydroxyacetone phosphate. It participates in carbohydrate degradation; glycolysis; D-glyceraldehyde 3-phosphate and glycerone phosphate from D-glucose: step 4/4. The protein is Fructose-bisphosphate aldolase class 1 of Staphylococcus aureus (strain Mu3 / ATCC 700698).